The following is a 245-amino-acid chain: 2,3-bisphosphoglycerate-dependent phosphoglycerate mutase (245 aa).

Substrate is bound by residues 8–15 (RHGQSLWN), 21–22 (TG), Arg60, 87–90 (ERHY), Lys98, 114–115 (RR), and 183–184 (GN). The active-site Tele-phosphohistidine intermediate is the His9. The Proton donor/acceptor role is filled by Glu87.

It belongs to the phosphoglycerate mutase family. BPG-dependent PGAM subfamily.

The enzyme catalyses (2R)-2-phosphoglycerate = (2R)-3-phosphoglycerate. It functions in the pathway carbohydrate degradation; glycolysis; pyruvate from D-glyceraldehyde 3-phosphate: step 3/5. Its function is as follows. Catalyzes the interconversion of 2-phosphoglycerate and 3-phosphoglycerate. The chain is 2,3-bisphosphoglycerate-dependent phosphoglycerate mutase from Bacillus cereus (strain ZK / E33L).